The following is a 138-amino-acid chain: Translation initiation factor 5A (138 aa).

Position 37 is a hypusine (Lys37).

It belongs to the eIF-5A family.

The protein resides in the cytoplasm. Functionally, functions by promoting the formation of the first peptide bond. This is Translation initiation factor 5A from Pyrococcus furiosus (strain ATCC 43587 / DSM 3638 / JCM 8422 / Vc1).